We begin with the raw amino-acid sequence, 432 residues long: Adenylosuccinate synthetase (432 aa).

Residues 13–19 (GDEGKGK) and 41–43 (GHT) each bind GTP. Residue D14 is the Proton acceptor of the active site. Residues D14 and G41 each contribute to the Mg(2+) site. IMP is bound by residues 14 to 17 (DEGK), 39 to 42 (NAGH), T130, R144, Q225, T240, and R304. H42 serves as the catalytic Proton donor. 300 to 306 (ATTGRSR) provides a ligand contact to substrate. Residues R306, 332-334 (KLD), and 415-417 (STG) each bind GTP.

This sequence belongs to the adenylosuccinate synthetase family. As to quaternary structure, homodimer. Mg(2+) serves as cofactor.

Its subcellular location is the cytoplasm. It carries out the reaction IMP + L-aspartate + GTP = N(6)-(1,2-dicarboxyethyl)-AMP + GDP + phosphate + 2 H(+). Its pathway is purine metabolism; AMP biosynthesis via de novo pathway; AMP from IMP: step 1/2. In terms of biological role, plays an important role in the de novo pathway of purine nucleotide biosynthesis. Catalyzes the first committed step in the biosynthesis of AMP from IMP. The sequence is that of Adenylosuccinate synthetase from Proteus mirabilis (strain HI4320).